Here is a 137-residue protein sequence, read N- to C-terminus: Large ribosomal subunit protein uL16 (137 aa).

Belongs to the universal ribosomal protein uL16 family. In terms of assembly, part of the 50S ribosomal subunit.

Functionally, binds 23S rRNA and is also seen to make contacts with the A and possibly P site tRNAs. This Beijerinckia indica subsp. indica (strain ATCC 9039 / DSM 1715 / NCIMB 8712) protein is Large ribosomal subunit protein uL16.